The primary structure comprises 261 residues: 3-methyl-2-oxobutanoate hydroxymethyltransferase (261 aa).

Positions 44 and 83 each coordinate Mg(2+). Residues 44 to 45 (DS), Asp83, and Lys112 each bind 3-methyl-2-oxobutanoate. Glu114 is a binding site for Mg(2+). The active-site Proton acceptor is Glu181.

Belongs to the PanB family. As to quaternary structure, homodecamer; pentamer of dimers. Mg(2+) serves as cofactor.

It localises to the cytoplasm. The enzyme catalyses 3-methyl-2-oxobutanoate + (6R)-5,10-methylene-5,6,7,8-tetrahydrofolate + H2O = 2-dehydropantoate + (6S)-5,6,7,8-tetrahydrofolate. The protein operates within cofactor biosynthesis; (R)-pantothenate biosynthesis; (R)-pantoate from 3-methyl-2-oxobutanoate: step 1/2. In terms of biological role, catalyzes the reversible reaction in which hydroxymethyl group from 5,10-methylenetetrahydrofolate is transferred onto alpha-ketoisovalerate to form ketopantoate. In Acidithiobacillus ferrooxidans (strain ATCC 23270 / DSM 14882 / CIP 104768 / NCIMB 8455) (Ferrobacillus ferrooxidans (strain ATCC 23270)), this protein is 3-methyl-2-oxobutanoate hydroxymethyltransferase.